The primary structure comprises 90 residues: Large ribosomal subunit protein uL23c (90 aa).

This sequence belongs to the universal ribosomal protein uL23 family. In terms of assembly, part of the 50S ribosomal subunit.

The protein localises to the plastid. Its subcellular location is the chloroplast. Binds to 23S rRNA. The sequence is that of Large ribosomal subunit protein uL23c (rpl23) from Tetradesmus obliquus (Green alga).